The primary structure comprises 329 residues: tRNA N6-adenosine threonylcarbamoyltransferase (329 aa).

Fe cation is bound by residues histidine 110 and histidine 114. Substrate-binding positions include 132-136, aspartate 165, glycine 178, and asparagine 271; that span reads VISGG. Aspartate 299 contacts Fe cation.

The protein belongs to the KAE1 / TsaD family. The cofactor is Fe(2+).

The protein localises to the cytoplasm. The catalysed reaction is L-threonylcarbamoyladenylate + adenosine(37) in tRNA = N(6)-L-threonylcarbamoyladenosine(37) in tRNA + AMP + H(+). Required for the formation of a threonylcarbamoyl group on adenosine at position 37 (t(6)A37) in tRNAs that read codons beginning with adenine. Is involved in the transfer of the threonylcarbamoyl moiety of threonylcarbamoyl-AMP (TC-AMP) to the N6 group of A37, together with TsaE and TsaB. TsaD likely plays a direct catalytic role in this reaction. This is tRNA N6-adenosine threonylcarbamoyltransferase from Neorickettsia sennetsu (strain ATCC VR-367 / Miyayama) (Ehrlichia sennetsu).